The following is a 329-amino-acid chain: MKKGLKTIWHNFIQKREKVKQYRALYEKQIKQYQQKVAKLDPTTKAEEIANLQSEIDVLQRLIKIKNTKDDVVKQDFDKKNVFEIENLNFWYNKDKQVLFDINLKIKRNKITALIGKSGCGKSTFIRCLNKLNDLNENVRWNGKIFFLGKNINSGIINDLTLRTRVGMVFQQLTPFNFSIFENIAYGLRAHGIHNKQAIHEIVEQALKSTALWDEVKDNLHRNANTLSGGQQQRLCIARAIALQPDVLLMDEPTSALDSIATNSIELLIQQLKEKYTIIIVTHSMAQTIRITDETIFFANGRVVEQGTTKQIFTRPKQKETNRYISGRN.

The region spanning 83–325 is the ABC transporter domain; the sequence is FEIENLNFWY…PKQKETNRYI (243 aa). 116–123 contacts ATP; sequence GKSGCGKS.

Belongs to the ABC transporter superfamily. Phosphate importer (TC 3.A.1.7) family. In terms of assembly, the complex is composed of two ATP-binding proteins (PstB), two transmembrane proteins (PstC and PstA) and a solute-binding protein (PstS).

Its subcellular location is the cell membrane. It carries out the reaction phosphate(out) + ATP + H2O = ADP + 2 phosphate(in) + H(+). In terms of biological role, part of the ABC transporter complex PstSACB involved in phosphate import. Responsible for energy coupling to the transport system. In Mycoplasma pneumoniae (strain ATCC 29342 / M129 / Subtype 1) (Mycoplasmoides pneumoniae), this protein is Phosphate import ATP-binding protein PstB.